The following is a 262-amino-acid chain: Eukaryotic translation initiation factor 3 subunit G (262 aa).

The RRM domain occupies asparagine 182–proline 260.

It belongs to the eIF-3 subunit G family. Component of the eukaryotic translation initiation factor 3 (eIF-3) complex.

It is found in the cytoplasm. Functionally, RNA-binding component of the eukaryotic translation initiation factor 3 (eIF-3) complex, which is involved in protein synthesis of a specialized repertoire of mRNAs and, together with other initiation factors, stimulates binding of mRNA and methionyl-tRNAi to the 40S ribosome. The eIF-3 complex specifically targets and initiates translation of a subset of mRNAs involved in cell proliferation. This subunit can bind 18S rRNA. Binds to GC-rich 5'UTRs in cholinergic motor neurons, thereby may play a role in translational regulation of mRNAs involved in neuropeptide signaling and stress response, including hlh-30 isoform d and ncs-2. This is Eukaryotic translation initiation factor 3 subunit G from Caenorhabditis elegans.